Here is a 207-residue protein sequence, read N- to C-terminus: Small heat shock protein hspG7 (207 aa).

The sHSP domain occupies K30–N207. 2 stretches are compositionally biased toward low complexity: residues Q84–T101 and S122–T135. Positions Q84 to D149 are disordered. Basic and acidic residues predominate over residues K136–D149.

Belongs to the small heat shock protein (HSP20) family.

This Dictyostelium discoideum (Social amoeba) protein is Small heat shock protein hspG7 (hspG7).